The following is a 282-amino-acid chain: 4-diphosphocytidyl-2-C-methyl-D-erythritol kinase (282 aa).

The active site involves lysine 13. 96 to 106 contributes to the ATP binding site; it reads PMGGGIGGGSS. The active site involves aspartate 138.

It belongs to the GHMP kinase family. IspE subfamily.

The enzyme catalyses 4-CDP-2-C-methyl-D-erythritol + ATP = 4-CDP-2-C-methyl-D-erythritol 2-phosphate + ADP + H(+). The protein operates within isoprenoid biosynthesis; isopentenyl diphosphate biosynthesis via DXP pathway; isopentenyl diphosphate from 1-deoxy-D-xylulose 5-phosphate: step 3/6. In terms of biological role, catalyzes the phosphorylation of the position 2 hydroxy group of 4-diphosphocytidyl-2C-methyl-D-erythritol. This chain is 4-diphosphocytidyl-2-C-methyl-D-erythritol kinase, found in Pseudomonas syringae pv. tomato (strain ATCC BAA-871 / DC3000).